The sequence spans 261 residues: 5'-nucleotidase SurE (261 aa).

A divalent metal cation contacts are provided by aspartate 8, aspartate 9, serine 43, and asparagine 96.

The protein belongs to the SurE nucleotidase family. It depends on a divalent metal cation as a cofactor.

The protein resides in the cytoplasm. The enzyme catalyses a ribonucleoside 5'-phosphate + H2O = a ribonucleoside + phosphate. Its function is as follows. Nucleotidase that shows phosphatase activity on nucleoside 5'-monophosphates. The protein is 5'-nucleotidase SurE of Dinoroseobacter shibae (strain DSM 16493 / NCIMB 14021 / DFL 12).